The following is a 354-amino-acid chain: Isopentenyl-diphosphate delta-isomerase (354 aa).

11-12 is a substrate binding site; that stretch reads KK. Residues Ser-67, 68–70, Ser-98, and Asn-126 each bind FMN; that span reads SMT. Residue 98 to 100 coordinates substrate; that stretch reads SFK. Residue Gln-160 participates in substrate binding. A Mg(2+)-binding site is contributed by Glu-161. FMN contacts are provided by residues Lys-192, Thr-222, and 289–290; that span reads AA.

Belongs to the IPP isomerase type 2 family. In terms of assembly, homooctamer. Dimer of tetramers. Requires FMN as cofactor. The cofactor is NADPH. It depends on Mg(2+) as a cofactor.

It localises to the cytoplasm. The enzyme catalyses isopentenyl diphosphate = dimethylallyl diphosphate. In terms of biological role, involved in the biosynthesis of isoprenoids. Catalyzes the 1,3-allylic rearrangement of the homoallylic substrate isopentenyl (IPP) to its allylic isomer, dimethylallyl diphosphate (DMAPP). The polypeptide is Isopentenyl-diphosphate delta-isomerase (Borrelia garinii subsp. bavariensis (strain ATCC BAA-2496 / DSM 23469 / PBi) (Borreliella bavariensis)).